The chain runs to 439 residues: Homogentisate 1,2-dioxygenase (439 aa).

Catalysis depends on His-293, which acts as the Proton acceptor. Residues His-336 and Glu-342 each contribute to the Fe cation site. Homogentisate is bound by residues Tyr-351 and His-372. Residue His-372 coordinates Fe cation.

It belongs to the homogentisate dioxygenase family. Hexamer; dimer of trimers. Fe cation is required as a cofactor.

The enzyme catalyses homogentisate + O2 = 4-maleylacetoacetate + H(+). It participates in amino-acid degradation; L-phenylalanine degradation; acetoacetate and fumarate from L-phenylalanine: step 4/6. Its function is as follows. Involved in the catabolism of homogentisate (2,5-dihydroxyphenylacetate or 2,5-OH-PhAc), a central intermediate in the degradation of phenylalanine and tyrosine. Catalyzes the oxidative ring cleavage of the aromatic ring of homogentisate to yield maleylacetoacetate. The polypeptide is Homogentisate 1,2-dioxygenase (Cupriavidus necator (strain ATCC 17699 / DSM 428 / KCTC 22496 / NCIMB 10442 / H16 / Stanier 337) (Ralstonia eutropha)).